The sequence spans 350 residues: Trans-enoyl reductase iliB (350 aa).

50–53 (VDGK) is an NADP(+) binding site. Residue 145–152 (AAIATVGL) participates in substrate binding. Residues 177-180 (SAAS), tyrosine 195, and 242-243 (LD) contribute to the NADP(+) site. 262–266 (TPTQF) is a binding site for substrate. An NADP(+)-binding site is contributed by 331–332 (IK).

Belongs to the zinc-containing alcohol dehydrogenase family. As to quaternary structure, monomer.

The enzyme catalyses N-[(4E,6E,10S,12Z,14E)-6,10-dimethyl-3-oxohexadeca-4,6,12,14-tetraenoyl]-L-tyrosyl-[ACP] = (3E,5S)-3-[(2E,4E,8S,10E,12Z)-1-hydroxy-4,8-dimethyltetradeca-2,4,10,12-tetraen-1-ylidene]-5-[(4-hydroxyphenyl)methyl]pyrrolidine-2,4-dione + holo-[ACP] + H(+). Its pathway is mycotoxin biosynthesis. Its function is as follows. Trans-enoyl reductase; part of the gene cluster that mediates the biosynthesis of ilicicolin H, a 4-hydroxy-2-pyridonealkaloid that has potent and broad antifungal activities by inhibiting the mitochondrial respiration chain. IliB collaborates with the hybrid PKS-NRPS synthetase iliA to assemble the backbone of ilicicolin H. The PKS portion of iliA and trans-acting enoyl reductase iliB work together to construct an octaketide, and two methyl groups are introduced by the MT domain of iliA during the chain assembly. The nascent chain is then condensed with tyrosine, catalyzed by the iliA C domain, and the resulting PKS-NRPS hybrid is offloaded by the iliA RED domain to form an advanced tetramic acid intermediate. The biosynthesis of ilicicolin H starts with formation of the tetramic acid by the hybrid PKS-NRPS synthetase iliA with the partnering trans-enoyl reductase iliB since iliA lacks a designated enoylreductase (ER) domain. The cytochrome P450 monooxygenase iliC then catalyzes the ring expansion of the tetramate to the acyclic 2-pyridone. The pericyclase iliD further converts the acyclic 2-pyridone into 8-epi-ilicicolin H. 8-epi-ilicicolin H might then spontaneously convert to ilicicolin H since ilicicolin H is produced in the absence of the epimerase iliE, in contrast to what was observed for the Talaromyces variabilis ilicolin H biosynthetic pathway. This Hypocrea jecorina (strain QM6a) (Trichoderma reesei) protein is Trans-enoyl reductase iliB.